Reading from the N-terminus, the 780-residue chain is Potassium/sodium hyperpolarization-activated cyclic nucleotide-gated channel 3 (780 aa).

Positions 1–47 (MEEEARPAVGDGEAATPARETPPAAPAQARAASGGVPESAPEPKRRQ) are disordered. Topologically, residues 1 to 96 (MEEEARPAVG…PYSDFRFYWD (96 aa)) are cytoplasmic. Low complexity predominate over residues 13–32 (EAATPARETPPAAPAQARAA). Residues 45-90 (RRQLGTLLQPTVNKFSLRVFGSHKAVEIEQERVKSAGAWIIHPYSD) are involved in subunit assembly. The chain crosses the membrane as a helical span at residues 97-117 (LIMLLLMVGNLIVLPVGITFF). Residues 118 to 123 (KEENSP) are Extracellular-facing. Residues 124 to 144 (PWIVFNVLSDTFFLLDLVLNF) traverse the membrane as a helical segment. Over 145–170 (RTGIVVEEGAEILLAPRAIRTRYLRT) the chain is Cytoplasmic. Residues 171–191 (WFLVDLISSIPVDYIFLVVEL) traverse the membrane as a helical segment. Residues 192–200 (EPRLDAEVY) are Extracellular-facing. A helical; Voltage-sensor membrane pass occupies residues 201–221 (KTARALRIVRFTKILSLLRLL). Residues 222–252 (RLSRLIRYMHQWEEIFHMTYDLASAVVRIFN) are Cytoplasmic-facing. Residues 253 to 273 (LIGMMLLLCHWDGCLQFLVPM) form a helical membrane-spanning segment. At 274 to 296 (LQDFPSDCWVSMNRMVNHSWGRQ) the chain is on the extracellular side. The N-linked (GlcNAc...) asparagine glycan is linked to Asn-290. An intramembrane region (pore-forming) is located at residues 297 to 318 (YSHALFKAMSHMLCIGYGQQAP). Residues 319-328 (VGMPDVWLTM) are Extracellular-facing. The chain crosses the membrane as a helical span at residues 329-349 (LSMIVGATCYAMFIGHATALI). The Cytoplasmic segment spans residues 350 to 780 (QSLDSSRRQY…PRGPQISANM (431 aa)). Residues 353 to 780 (DSSRRQYQEK…PRGPQISANM (428 aa)) form an interaction with KCTD3 region. 3',5'-cyclic AMP is bound by residues Gly-491, Glu-492, Cys-494, Arg-501, Thr-502, Arg-542, and Arg-545. Residues 549 to 569 (KNSILQRKRSEPSPGSSSGGV) form a disordered region. Ser-634 carries the post-translational modification Phosphoserine. A compositionally biased stretch (polar residues) spans 687 to 698 (ASLSRTGRSQVS). The segment at 687 to 780 (ASLSRTGRSQ…PRGPQISANM (94 aa)) is disordered.

The protein belongs to the potassium channel HCN family. In terms of assembly, homotetramer. The potassium channel is composed of a homo- or heterotetrameric complex of pore-forming subunits. Interacts with HCN1. Interacts with KCTD3; this interaction increases cell surface expression and current density of this channel. Interacts with PEX5L.

The protein localises to the cell membrane. It carries out the reaction K(+)(in) = K(+)(out). The catalysed reaction is Na(+)(in) = Na(+)(out). Its activity is regulated as follows. Inhibited by Cs(1+) and ivabradine. Unlike HCN2 and HCN4, HCN3 is insensitive to cyclic nucleotides, such as cAMP or cGMP. This lack of sensitivity of HCN3, despite harboring a functional cyclic nucleotide-binding domain (CNBD), may be explained by its shorter C-terminal sequence, which may alter the normal autoinhibition of the channel. Phosphatidylinositol-4,5-bisphosphate (PIP(2)) shifts HCN3 activation to more depolarized potentials and accelerated activation kinetics. In terms of biological role, hyperpolarization-activated ion channel that are permeable to sodium and potassium ions, with an about 3:1 preference for potassium ions. Contributes to the native pacemaker currents in heart (If) and in neurons (Ih). In particular, plays a pivotal role in maintaining excitability and promoting rhythmic burst firing within hypothalamic nuclei. Exerts a significant influence on the configuration of the cardiac action potential waveform. Does not appear to play a prominent role in the processing of acute, neuropathic, or inflammatory pain. The chain is Potassium/sodium hyperpolarization-activated cyclic nucleotide-gated channel 3 (Hcn3) from Rattus norvegicus (Rat).